Reading from the N-terminus, the 99-residue chain is Nucleoid-associated protein SZO_16661 (99 aa).

Belongs to the YbaB/EbfC family. In terms of assembly, homodimer.

The protein resides in the cytoplasm. The protein localises to the nucleoid. Functionally, binds to DNA and alters its conformation. May be involved in regulation of gene expression, nucleoid organization and DNA protection. This chain is Nucleoid-associated protein SZO_16661, found in Streptococcus equi subsp. zooepidemicus (strain H70).